We begin with the raw amino-acid sequence, 669 residues long: NADH-ubiquinone oxidoreductase chain 5 (669 aa).

15 helical membrane-spanning segments follow: residues 3 to 23 (LLIVILPLIGSFAAGFFGRFL), 50 to 70 (VALCASACYIKIAPWIFSELF), 81 to 100 (LTVILLLVVTIVSSLVHIYS), 119 to 139 (IFTFFMLMLVTGDNFIQLFLG), 178 to 198 (LALGIMGCFTIFQTVDFSTIF), 211 to 231 (FLFCNMGFHAITVICILVFIG), 253 to 273 (TPVSALIHAATMVTAGVFMIA), 286 to 306 (LIVITFVGAMTSFFAATTGIL), 322 to 342 (LGYMIFACGISNYSVSVFHLM), 377 to 397 (LLPFTYAMMLIGSLSLIGFPF), 423 to 443 (FWLGSVSVFFTSYYSFRLLFL), 464 to 484 (ILMAIPLILLAFGSIFVGYLA), 522 to 542 (LIPILFSTLGSFVAYSVNFVV), 628 to 648 (AFVMLLGLTIFISVIGLWDFI), and 649 to 669 (SFWVDNRLYFIYIVSFLFINI).

The protein belongs to the complex I subunit 5 family.

The protein resides in the mitochondrion inner membrane. It carries out the reaction a ubiquinone + NADH + 5 H(+)(in) = a ubiquinol + NAD(+) + 4 H(+)(out). In terms of biological role, core subunit of the mitochondrial membrane respiratory chain NADH dehydrogenase (Complex I) that is believed to belong to the minimal assembly required for catalysis. Complex I functions in the transfer of electrons from NADH to the respiratory chain. The immediate electron acceptor for the enzyme is believed to be ubiquinone. This chain is NADH-ubiquinone oxidoreductase chain 5 (ND5), found in Marchantia polymorpha (Common liverwort).